We begin with the raw amino-acid sequence, 842 residues long: Elongation factor 2 (842 aa).

A tr-type G domain is found at 17–346; it reads TNVRNMSVIA…MIVMHLPSPV (330 aa). Residues 26–33, 158–161, and 213–215 contribute to the GTP site; these read AHVDHGKS, NKVD, and SGL. Histidine 699 bears the Diphthamide mark.

Belongs to the TRAFAC class translation factor GTPase superfamily. Classic translation factor GTPase family. EF-G/EF-2 subfamily.

Its subcellular location is the cytoplasm. It carries out the reaction GTP + H2O = GDP + phosphate + H(+). In terms of biological role, catalyzes the GTP-dependent ribosomal translocation step during translation elongation. During this step, the ribosome changes from the pre-translocational (PRE) to the post-translocational (POST) state as the newly formed A-site-bound peptidyl-tRNA and P-site-bound deacylated tRNA move to the P and E sites, respectively. Catalyzes the coordinated movement of the two tRNA molecules, the mRNA and conformational changes in the ribosome. The polypeptide is Elongation factor 2 (EFT1) (Candida glabrata (strain ATCC 2001 / BCRC 20586 / JCM 3761 / NBRC 0622 / NRRL Y-65 / CBS 138) (Yeast)).